We begin with the raw amino-acid sequence, 89 residues long: Large ribosomal subunit protein bL27 (89 aa).

The disordered stretch occupies residues 1-21 (MAHKKGASSSRNGRDSNAQRL). Residues 7 to 19 (ASSSRNGRDSNAQ) are compositionally biased toward polar residues.

This sequence belongs to the bacterial ribosomal protein bL27 family.

The sequence is that of Large ribosomal subunit protein bL27 from Frankia alni (strain DSM 45986 / CECT 9034 / ACN14a).